Here is a 947-residue protein sequence, read N- to C-terminus: Protein NETWORKED 2D (947 aa).

Residues Tyr10–Leu90 form the NAB domain. Coiled coils occupy residues Lys176–Glu205, Met247–Ser342, and Thr375–Lys433. 2 disordered regions span residues Asn455–Asp555 and Glu580–Asp620. The segment covering Pro474–Gln514 has biased composition (basic and acidic residues). Over residues Thr525 to Glu536 the composition is skewed to polar residues. Composition is skewed to basic and acidic residues over residues Ser537–Asp555, Glu580–Asp589, and Glu610–Asp620. Coiled coils occupy residues Arg645–Lys684 and Gly744–Ser773.

This sequence belongs to the NET family.

Plant-specific actin binding protein. May be part of a membrane-cytoskeletal adapter complex. In Arabidopsis thaliana (Mouse-ear cress), this protein is Protein NETWORKED 2D.